We begin with the raw amino-acid sequence, 24 residues long: Brevinin-1Ba (24 aa).

The cysteines at positions 18 and 24 are disulfide-linked.

As to expression, expressed by the skin glands.

The protein localises to the secreted. Functionally, antibacterial activity against Gram-positive bacterium S.aureus. In Lithobates berlandieri (Rio Grande leopard frog), this protein is Brevinin-1Ba.